Reading from the N-terminus, the 148-residue chain is Large ribosomal subunit protein bL9 (148 aa).

Belongs to the bacterial ribosomal protein bL9 family.

Functionally, binds to the 23S rRNA. In Sulfurimonas denitrificans (strain ATCC 33889 / DSM 1251) (Thiomicrospira denitrificans (strain ATCC 33889 / DSM 1251)), this protein is Large ribosomal subunit protein bL9.